A 1717-amino-acid chain; its full sequence is Protein MON2 homolog (1717 aa).

At serine 2 the chain carries N-acetylserine. A phosphoserine mark is found at serine 205 and serine 537. The interval 511–538 is disordered; that stretch reads ETECQTTTEEGSSPTQSTEQQDLQSTSD. A compositionally biased stretch (polar residues) spans 522–538; the sequence is SSPTQSTEQQDLQSTSD.

This sequence belongs to the MON2 family. Homooligomer. Heterotrimer with ATP9A and DOP1B; this interaction is retromer-independent. Interacts with SNX3.

The protein localises to the early endosome membrane. Its function is as follows. Plays a role in regulating membrane trafficking of cargo proteins. Together with ATP9A and DOP1B, regulates SNX3 retromer-mediated endosomal sorting of WLS away from lysosomal degradation. In Homo sapiens (Human), this protein is Protein MON2 homolog.